A 185-amino-acid chain; its full sequence is Elongation factor P (185 aa).

Belongs to the elongation factor P family.

It localises to the cytoplasm. It functions in the pathway protein biosynthesis; polypeptide chain elongation. Involved in peptide bond synthesis. Stimulates efficient translation and peptide-bond synthesis on native or reconstituted 70S ribosomes in vitro. Probably functions indirectly by altering the affinity of the ribosome for aminoacyl-tRNA, thus increasing their reactivity as acceptors for peptidyl transferase. The polypeptide is Elongation factor P (Halalkalibacterium halodurans (strain ATCC BAA-125 / DSM 18197 / FERM 7344 / JCM 9153 / C-125) (Bacillus halodurans)).